The primary structure comprises 199 residues: Peroxiredoxin-1 (199 aa).

N-acetylserine is present on serine 2. A Thioredoxin domain is found at alanine 6–phenylalanine 165. At lysine 7 the chain carries N6-acetyllysine; alternate. Residue lysine 7 forms a Glycyl lysine isopeptide (Lys-Gly) (interchain with G-Cter in SUMO2); alternate linkage. 2 positions are modified to N6-acetyllysine: lysine 16 and lysine 27. Serine 32 bears the Phosphoserine mark. Position 35 is an N6-acetyllysine; alternate (lysine 35). N6-succinyllysine; alternate is present on lysine 35. Catalysis depends on cysteine 52, which acts as the Cysteine sulfenic acid (-SOH) intermediate. Threonine 90 bears the Phosphothreonine; by CDK1 mark. Residue lysine 120 forms a Glycyl lysine isopeptide (Lys-Gly) (interchain with G-Cter in SUMO2) linkage. An N6-acetyllysine modification is found at lysine 136. The segment at glycine 176–lysine 199 is disordered. Basic and acidic residues predominate over residues isoleucine 184–lysine 199. A Glycyl lysine isopeptide (Lys-Gly) (interchain with G-Cter in SUMO1) cross-link involves residue lysine 185. Residue lysine 197 is modified to N6-acetyllysine.

It belongs to the peroxiredoxin family. AhpC/Prx1 subfamily. In terms of assembly, homodimer; disulfide-linked, upon oxidation. 5 homodimers assemble to form a ring-like decamer. Interacts with GDPD5; forms a mixed-disulfide with GDPD5. Interacts with SESN1 and SESN2. Interacts with FAM107A. Phosphorylated on Thr-90 during the M-phase, which leads to a more than 80% decrease in enzymatic activity. In terms of processing, acetylation increases reducing activity and resistance to superoxidation. Deacetylated by HDAC6 which decreases reducing activity. Post-translationally, the enzyme can be inactivated by further oxidation of the cysteine sulfenic acid (C(P)-SOH) to sulphinic acid (C(P)-SO2H) instead of its condensation to a disulfide bond. It can be reactivated by forming a transient disulfide bond with sulfiredoxin SRXN1, which reduces the cysteine sulfinic acid in an ATP- and Mg-dependent manner.

The protein localises to the cytoplasm. It is found in the melanosome. The catalysed reaction is a hydroperoxide + [thioredoxin]-dithiol = an alcohol + [thioredoxin]-disulfide + H2O. In terms of biological role, thiol-specific peroxidase that catalyzes the reduction of hydrogen peroxide and organic hydroperoxides to water and alcohols, respectively. Plays a role in cell protection against oxidative stress by detoxifying peroxides and as sensor of hydrogen peroxide-mediated signaling events. Might participate in the signaling cascades of growth factors and tumor necrosis factor-alpha by regulating the intracellular concentrations of H(2)O(2). Reduces an intramolecular disulfide bond in GDPD5 that gates the ability to GDPD5 to drive postmitotic motor neuron differentiation. The sequence is that of Peroxiredoxin-1 (PRDX1) from Homo sapiens (Human).